Here is a 385-residue protein sequence, read N- to C-terminus: Probable caffeine synthase MTL2 (385 aa).

The S-adenosyl-L-homocysteine site is built by Tyr18, Cys62, Asn67, Asp101, Leu102, Ser140, Phe141, and Cys157. Caffeine-binding residues include Tyr158, His161, and Trp162. Asn179 contacts Mg(2+). Thr238 contributes to the caffeine binding site. Residues Asp261, Phe263, and Asn264 each coordinate Mg(2+). Position 369 (Tyr369) interacts with caffeine.

Belongs to the methyltransferase superfamily. Type-7 methyltransferase family. Requires Mg(2+) as cofactor.

It participates in alkaloid biosynthesis. In terms of biological role, may be involved in the biosynthesis of caffeine. This is Probable caffeine synthase MTL2 from Coffea canephora (Robusta coffee).